The sequence spans 116 residues: uncharacterized protein (116 aa).

A disordered region spans residues 64-116 (RRFYSGTVNRNARSAGAASRSTSSVKRPLESKKRNARPETEKWCASYSAGNRR). Residues 73 to 87 (RNARSAGAASRSTSS) show a composition bias toward low complexity. Residues 90–105 (RPLESKKRNARPETEK) are compositionally biased toward basic and acidic residues.

This is an uncharacterized protein from Saccharomyces cerevisiae (strain ATCC 204508 / S288c) (Baker's yeast).